The sequence spans 539 residues: Protoporphyrinogen oxidase (539 aa).

FAD contacts are provided by residues 18-23 (GGGVSG), 43-44 (ES), tryptophan 51, 70-73 (GPRT), valine 300, and 521-523 (PGV).

The protein belongs to the protoporphyrinogen/coproporphyrinogen oxidase family. Protoporphyrinogen oxidase subfamily. FAD serves as cofactor.

Its subcellular location is the mitochondrion inner membrane. It carries out the reaction protoporphyrinogen IX + 3 O2 = protoporphyrin IX + 3 H2O2. It functions in the pathway porphyrin-containing compound metabolism; protoporphyrin-IX biosynthesis; protoporphyrin-IX from protoporphyrinogen-IX: step 1/1. Functionally, catalyzes the 6-electron oxidation of protoporphyrinogen-IX to form protoporphyrin-IX. This chain is Protoporphyrinogen oxidase, found in Saccharomyces cerevisiae (strain ATCC 204508 / S288c) (Baker's yeast).